The primary structure comprises 239 residues: Purine nucleoside phosphorylase DeoD-type (239 aa).

His5 contributes to the a purine D-ribonucleoside binding site. Phosphate contacts are provided by residues Gly21, Arg25, Arg44, and 88–91 (RVGS). A purine D-ribonucleoside contacts are provided by residues 180–182 (EME) and 204–205 (SD). Residue Asp205 is the Proton donor of the active site.

This sequence belongs to the PNP/UDP phosphorylase family. Homohexamer; trimer of homodimers.

It catalyses the reaction a purine D-ribonucleoside + phosphate = a purine nucleobase + alpha-D-ribose 1-phosphate. The enzyme catalyses a purine 2'-deoxy-D-ribonucleoside + phosphate = a purine nucleobase + 2-deoxy-alpha-D-ribose 1-phosphate. In terms of biological role, catalyzes the reversible phosphorolytic breakdown of the N-glycosidic bond in the beta-(deoxy)ribonucleoside molecules, with the formation of the corresponding free purine bases and pentose-1-phosphate. The polypeptide is Purine nucleoside phosphorylase DeoD-type (Salmonella agona (strain SL483)).